The following is a 51-amino-acid chain: Insulin (51 aa).

Cystine bridges form between Cys7/Cys37, Cys19/Cys50, and Cys36/Cys41.

This sequence belongs to the insulin family. Heterodimer of a B chain and an A chain linked by two disulfide bonds.

Its subcellular location is the secreted. Functionally, insulin decreases blood glucose concentration. It increases cell permeability to monosaccharides, amino acids and fatty acids. It accelerates glycolysis, the pentose phosphate cycle, and glycogen synthesis in liver. In Capra hircus (Goat), this protein is Insulin (INS).